Here is a 319-residue protein sequence, read N- to C-terminus: Serpentine receptor class X-43 (319 aa).

The next 7 membrane-spanning stretches (helical) occupy residues 28-48, 67-87, 95-115, 138-158, 164-184, 194-214, and 267-287; these read VVSM…IGCF, AQLM…LLNI, YLFG…FLLM, IRTF…YLVV, FVFY…CGTL, TVLS…LMAF, and FFFT…VVVF.

The protein belongs to the G-protein coupled receptor 1 family. As to expression, expressed in ASI sensory neurons.

The protein localises to the cell membrane. It localises to the perikaryon. It is found in the cell projection. Its subcellular location is the cilium. In terms of biological role, receptor for the ascaroside pheromone icas#9 which suppresses exploratory forgaging behavior. In response to ascaroside icas#9, may furthermore play a role in the expression of genes in the TGF-beta signaling pathway, such as daf-7, and in insulin signaling pathway, such as daf-28, which may in turn contribute to exploratory behavior. The sequence is that of Serpentine receptor class X-43 from Caenorhabditis elegans.